The sequence spans 197 residues: Imidazoleglycerol-phosphate dehydratase (197 aa).

This sequence belongs to the imidazoleglycerol-phosphate dehydratase family.

The protein localises to the cytoplasm. The enzyme catalyses D-erythro-1-(imidazol-4-yl)glycerol 3-phosphate = 3-(imidazol-4-yl)-2-oxopropyl phosphate + H2O. Its pathway is amino-acid biosynthesis; L-histidine biosynthesis; L-histidine from 5-phospho-alpha-D-ribose 1-diphosphate: step 6/9. This Pseudomonas fluorescens (strain ATCC BAA-477 / NRRL B-23932 / Pf-5) protein is Imidazoleglycerol-phosphate dehydratase.